Here is a 535-residue protein sequence, read N- to C-terminus: MNIPQEVARRRTFAIISHPDAGKTTLTEKLLLFAGAIQIAGSVKARKASRHASSDWMEIEKQRGISVASSVMQMEYRDCVINLLDTPGHQDFSEDTYRVLTAVDAALMVIDAANGVEPQTIRLLQVCRARNTPIITFINKLDREVREPLELLSEIEGHLGMDTVPFSWPVGMGKAFGGVFDIRRNRMRIFRAGQERRGEDDEFIDGLDNPEIPRRFGAAFAQASGEIELINEAAPAFDREAFLAGKQTPVFFGSAINNFGVQEVLDALVDQAPAPGPRQALEREVRPDEPKFTGVVFKVQANMDPAHRDRVAFVRVSSGRFERGMRLKVARTGKEMRPNNVVSFLSQRRELLDEAYAGDVIGIPNHGVLQLGDVLTEGESLRFTGLPFFAPELFQAVEVKDPLRTKQLRVGLTQLGEEGAIQVFRPEAAGGALLLGAVGQLQFEVVAHRLKTEYGVDARMMPSRYTSARWITSDDPRALRKFMDANAAHIAYDVVDAAAFLITSPAQLRVAEDLYPNVKFHALREHGGKVFGDKA.

One can recognise a tr-type G domain in the interval A8–R278. GTP is bound by residues S17–T24, D85–H89, and N139–D142.

This sequence belongs to the TRAFAC class translation factor GTPase superfamily. Classic translation factor GTPase family. PrfC subfamily.

Its subcellular location is the cytoplasm. Its function is as follows. Increases the formation of ribosomal termination complexes and stimulates activities of RF-1 and RF-2. It binds guanine nucleotides and has strong preference for UGA stop codons. It may interact directly with the ribosome. The stimulation of RF-1 and RF-2 is significantly reduced by GTP and GDP, but not by GMP. This Bordetella bronchiseptica (strain ATCC BAA-588 / NCTC 13252 / RB50) (Alcaligenes bronchisepticus) protein is Peptide chain release factor 3.